The sequence spans 1006 residues: UPF0182 protein Arth_2749 (1006 aa).

7 consecutive transmembrane segments (helical) span residues 18–38 (GALTPTLIVVALVVVGFIFFA), 64–84 (IIIFLAGFALMFVAMFYAIRI), 115–135 (VVMIGLPVLFGLFAGSAAASQ), 168–188 (FLGFVTGFLISVVVVAGIAGI), 211–231 (QIHLAVTGAVFLLLLGVNFWL), 260–280 (SILAVAAALVAILFIVAAVIG), and 287–307 (IGTAMLVITSILAGGVYPWVI). Disordered regions lie at residues 490–519 (GAPEGSPHREQDRPAGKEGDGETQYTFTGN), 896–923 (KAGDFANNGQTPPPAAGGSTPPATGGTD), and 975–1006 (LGSEGASPTPGATTAPTATPSAAATPSPSPSN). A compositionally biased stretch (basic and acidic residues) spans 495–509 (SPHREQDRPAGKEGD). Composition is skewed to low complexity over residues 911–923 (AGGSTPPATGGTD) and 979–1000 (GASPTPGATTAPTATPSAAATP).

The protein belongs to the UPF0182 family.

It localises to the cell membrane. This is UPF0182 protein Arth_2749 from Arthrobacter sp. (strain FB24).